Consider the following 491-residue polypeptide: Glutamyl-tRNA(Gln) amidotransferase subunit A (491 aa).

Catalysis depends on charge relay system residues Lys80 and Ser155. The active-site Acyl-ester intermediate is Ser179.

It belongs to the amidase family. GatA subfamily. In terms of assembly, heterotrimer of A, B and C subunits.

The enzyme catalyses L-glutamyl-tRNA(Gln) + L-glutamine + ATP + H2O = L-glutaminyl-tRNA(Gln) + L-glutamate + ADP + phosphate + H(+). Allows the formation of correctly charged Gln-tRNA(Gln) through the transamidation of misacylated Glu-tRNA(Gln) in organisms which lack glutaminyl-tRNA synthetase. The reaction takes place in the presence of glutamine and ATP through an activated gamma-phospho-Glu-tRNA(Gln). The polypeptide is Glutamyl-tRNA(Gln) amidotransferase subunit A (Salinispora arenicola (strain CNS-205)).